Consider the following 499-residue polypeptide: Protein adenylyltransferase Fic (499 aa).

A helical transmembrane segment spans residues 38 to 58; sequence FHYFVIFASGSLFSGLMFGLL. TPR repeat units lie at residues 126–159 and 160–194; these read ALSS…SPKH and PEIL…NPSH. Residues 251–256 carry the Inhibitory (S/T)XXXE(G/N) motif motif; sequence SVGIEG. Residues Glu255 and 337-340 contribute to the ATP site; that span reads VGGH. The Fido domain maps to 306 to 441; sequence ITLKDILEIH…IRPFVRFIAD (136 aa). The active site involves His384. ATP-binding positions include 388 to 395, 420 to 421, and Asn428; these read DGNGRTSR and YY.

This sequence belongs to the fic family. As to quaternary structure, homodimer.

The protein localises to the membrane. It catalyses the reaction L-tyrosyl-[protein] + ATP = O-(5'-adenylyl)-L-tyrosyl-[protein] + diphosphate. It carries out the reaction L-threonyl-[protein] + ATP = 3-O-(5'-adenylyl)-L-threonyl-[protein] + diphosphate. The enzyme catalyses 3-O-(5'-adenylyl)-L-threonyl-[protein] + H2O = L-threonyl-[protein] + AMP + H(+). Its activity is regulated as follows. The side chain of Glu-255 determines which of the two opposing activities (AMPylase or de-AMPylase) will take place. In response to endoplasmic reticulum stress, mediates de-AMPylase activity. Adenylyltransferase activity is inhibited by the inhibitory helix present at the N-terminus: Glu-255 binds ATP and competes with ATP-binding at Arg-395, thereby preventing adenylyltransferase activity. In unstressed cells, disengagement of Glu-255 promotes adenylyltransferase activity. Activation dissociates ATP-binding from Glu-255, allowing ordered binding of the entire ATP moiety with the alpha-phosphate in an orientation that is productive for accepting an incoming target hydroxyl side chain. Its function is as follows. Protein that can both mediate the addition of adenosine 5'-monophosphate (AMP) to specific residues of target proteins (AMPylation), and the removal of the same modification from target proteins (de-AMPylation), depending on the context. The side chain of Glu-255 determines which of the two opposing activities (AMPylase or de-AMPylase) will take place. Acts as a key regulator of the unfolded protein response (UPR) by mediating AMPylation or de-AMPylation of Hsc70-3/BiP. In unstressed cells, acts as an adenylyltransferase by mediating AMPylation of Hsc70-3/BiP at 'Thr-518', thereby inactivating it. In response to endoplasmic reticulum stress, acts as a phosphodiesterase by mediating removal of ATP (de-AMPylation) from Hsc70-3/BiP at 'Thr-518', leading to restore HSPA5/BiP activity. In Aedes aegypti (Yellowfever mosquito), this protein is Protein adenylyltransferase Fic.